Consider the following 346-residue polypeptide: Beta-ketoacyl-[acyl-carrier-protein] synthase III (346 aa).

Active-site residues include C120 and H256. Residues 257–261 (QANIR) are ACP-binding. The active site involves N286.

It belongs to the thiolase-like superfamily. FabH family. As to quaternary structure, homodimer.

The protein resides in the cytoplasm. It carries out the reaction malonyl-[ACP] + acetyl-CoA + H(+) = 3-oxobutanoyl-[ACP] + CO2 + CoA. The protein operates within lipid metabolism; fatty acid biosynthesis. Its function is as follows. Catalyzes the condensation reaction of fatty acid synthesis by the addition to an acyl acceptor of two carbons from malonyl-ACP. Catalyzes the first condensation reaction which initiates fatty acid synthesis and may therefore play a role in governing the total rate of fatty acid production. Possesses both acetoacetyl-ACP synthase and acetyl transacylase activities. Its substrate specificity determines the biosynthesis of branched-chain and/or straight-chain of fatty acids. This chain is Beta-ketoacyl-[acyl-carrier-protein] synthase III, found in Deinococcus geothermalis (strain DSM 11300 / CIP 105573 / AG-3a).